Consider the following 469-residue polypeptide: 3-isopropylmalate dehydratase large subunit (469 aa).

Cys347, Cys410, and Cys413 together coordinate [4Fe-4S] cluster.

It belongs to the aconitase/IPM isomerase family. LeuC type 1 subfamily. Heterodimer of LeuC and LeuD. [4Fe-4S] cluster serves as cofactor.

It carries out the reaction (2R,3S)-3-isopropylmalate = (2S)-2-isopropylmalate. Its pathway is amino-acid biosynthesis; L-leucine biosynthesis; L-leucine from 3-methyl-2-oxobutanoate: step 2/4. Catalyzes the isomerization between 2-isopropylmalate and 3-isopropylmalate, via the formation of 2-isopropylmaleate. In Burkholderia thailandensis (strain ATCC 700388 / DSM 13276 / CCUG 48851 / CIP 106301 / E264), this protein is 3-isopropylmalate dehydratase large subunit.